Here is a 513-residue protein sequence, read N- to C-terminus: Alpha,alpha-trehalose-phosphate synthase [UDP-forming] (513 aa).

Residue Tyr-40 is modified to Phosphotyrosine. D-glucose 6-phosphate is bound by residues Tyr-104 and Asp-158. Residues Arg-294 and Lys-299 each contribute to the UDP site. Arg-294 and Lys-299 together coordinate UDP-alpha-D-glucose. Residue Arg-332 coordinates D-glucose 6-phosphate. Position 393–401 (Asp-393–Glu-401) interacts with UDP-alpha-D-glucose. Leu-397–Glu-401 contributes to the UDP binding site. A Phosphoserine modification is found at Ser-503.

This sequence belongs to the glycosyltransferase 20 family. As to quaternary structure, homomer. Component of the trehalose synthase complex that contains at least tps1, ntp1 and tpp1. Interacts with tpp1. Interacts with ntp1; the interaction is independent of stress conditions.

Its subcellular location is the cytoplasm. It localises to the nucleus. The catalysed reaction is D-glucose 6-phosphate + UDP-alpha-D-glucose = alpha,alpha-trehalose 6-phosphate + UDP + H(+). The protein operates within carbohydrate biosynthesis. In terms of biological role, synthase catalytic subunit of the trehalose synthase complex that catalyzes the production of trehalose from glucose-6-phosphate and UDP-alpha-D-glucose in a two step process. The disaccharide trehalose serves as a storage carbohydrate that is mobilized during nutrient stress and spore germination. Together with ntp1, regulates the level of trehalose as a protectant for cell integrity during thermal and osmotic stress. The polypeptide is Alpha,alpha-trehalose-phosphate synthase [UDP-forming] (Schizosaccharomyces pombe (strain 972 / ATCC 24843) (Fission yeast)).